The chain runs to 445 residues: Phosphoglucosamine mutase (445 aa).

The active-site Phosphoserine intermediate is the Ser102. Residues Ser102, Asp241, Asp243, and Asp245 each coordinate Mg(2+). At Ser102 the chain carries Phosphoserine.

The protein belongs to the phosphohexose mutase family. Mg(2+) serves as cofactor. Activated by phosphorylation.

The enzyme catalyses alpha-D-glucosamine 1-phosphate = D-glucosamine 6-phosphate. In terms of biological role, catalyzes the conversion of glucosamine-6-phosphate to glucosamine-1-phosphate. The chain is Phosphoglucosamine mutase from Pectobacterium atrosepticum (strain SCRI 1043 / ATCC BAA-672) (Erwinia carotovora subsp. atroseptica).